The sequence spans 242 residues: tRNA (guanine-N(1)-)-methyltransferase (242 aa).

Residues G115 and 134-139 contribute to the S-adenosyl-L-methionine site; that span reads LGDFVL. Basic and acidic residues predominate over residues 210 to 224; that stretch reads QEQREQRTAARRPDL. Residues 210-242 are disordered; the sequence is QEQREQRTAARRPDLMQRWQQRFGADNDSEHRA.

It belongs to the RNA methyltransferase TrmD family. Homodimer.

It is found in the cytoplasm. The enzyme catalyses guanosine(37) in tRNA + S-adenosyl-L-methionine = N(1)-methylguanosine(37) in tRNA + S-adenosyl-L-homocysteine + H(+). Functionally, specifically methylates guanosine-37 in various tRNAs. The chain is tRNA (guanine-N(1)-)-methyltransferase from Synechococcus sp. (strain WH7803).